The following is a 199-amino-acid chain: Adenine phosphoribosyltransferase (199 aa).

Belongs to the purine/pyrimidine phosphoribosyltransferase family. As to quaternary structure, homodimer.

The protein resides in the cytoplasm. The catalysed reaction is AMP + diphosphate = 5-phospho-alpha-D-ribose 1-diphosphate + adenine. It functions in the pathway purine metabolism; AMP biosynthesis via salvage pathway; AMP from adenine: step 1/1. Catalyzes a salvage reaction resulting in the formation of AMP, that is energically less costly than de novo synthesis. This Rhodopseudomonas palustris (strain BisB18) protein is Adenine phosphoribosyltransferase.